Consider the following 311-residue polypeptide: Porphobilinogen deaminase (311 aa).

Cys-245 is subject to S-(dipyrrolylmethanemethyl)cysteine.

It belongs to the HMBS family. As to quaternary structure, monomer. It depends on dipyrromethane as a cofactor.

It catalyses the reaction 4 porphobilinogen + H2O = hydroxymethylbilane + 4 NH4(+). Its pathway is porphyrin-containing compound metabolism; protoporphyrin-IX biosynthesis; coproporphyrinogen-III from 5-aminolevulinate: step 2/4. Functionally, tetrapolymerization of the monopyrrole PBG into the hydroxymethylbilane pre-uroporphyrinogen in several discrete steps. This chain is Porphobilinogen deaminase, found in Acinetobacter baylyi (strain ATCC 33305 / BD413 / ADP1).